We begin with the raw amino-acid sequence, 689 residues long: DNA topoisomerase 1 (689 aa).

The 111-residue stretch at 3-113 (DNLVIVESPA…KENRVVFNEI (111 aa)) folds into the Toprim domain. Residues Glu9 and Asp82 each contribute to the Mg(2+) site. The 429-residue stretch at 129-557 (EMNLVDAQQA…FFSSFKQDVE (429 aa)) folds into the Topo IA-type catalytic domain. An interaction with DNA region spans residues 163–168 (SAGRVQ). The active-site O-(5'-phospho-DNA)-tyrosine intermediate is Tyr298. Residues 328–357 (SKRKASGKQGDQDAHEAIRPSSTMRTPDDM) form a disordered region. 3 C4-type zinc fingers span residues 577 to 603 (CEVC…FPDC), 617 to 645 (CPKC…YPEC), and 658 to 681 (CPKC…CSNC).

The protein belongs to the type IA topoisomerase family. In terms of assembly, monomer. Mg(2+) serves as cofactor.

It carries out the reaction ATP-independent breakage of single-stranded DNA, followed by passage and rejoining.. In terms of biological role, releases the supercoiling and torsional tension of DNA, which is introduced during the DNA replication and transcription, by transiently cleaving and rejoining one strand of the DNA duplex. Introduces a single-strand break via transesterification at a target site in duplex DNA. The scissile phosphodiester is attacked by the catalytic tyrosine of the enzyme, resulting in the formation of a DNA-(5'-phosphotyrosyl)-enzyme intermediate and the expulsion of a 3'-OH DNA strand. The free DNA strand then undergoes passage around the unbroken strand, thus removing DNA supercoils. Finally, in the religation step, the DNA 3'-OH attacks the covalent intermediate to expel the active-site tyrosine and restore the DNA phosphodiester backbone. In Staphylococcus aureus (strain N315), this protein is DNA topoisomerase 1.